The primary structure comprises 251 residues: tRNA (guanine-N(7)-)-methyltransferase (251 aa).

Residues glutamate 69, glutamate 94, aspartate 121, and aspartate 143 each contribute to the S-adenosyl-L-methionine site. The active site involves aspartate 143. Substrate contacts are provided by lysine 147 and aspartate 179.

This sequence belongs to the class I-like SAM-binding methyltransferase superfamily. TrmB family.

It catalyses the reaction guanosine(46) in tRNA + S-adenosyl-L-methionine = N(7)-methylguanosine(46) in tRNA + S-adenosyl-L-homocysteine. The protein operates within tRNA modification; N(7)-methylguanine-tRNA biosynthesis. Catalyzes the formation of N(7)-methylguanine at position 46 (m7G46) in tRNA. The polypeptide is tRNA (guanine-N(7)-)-methyltransferase (Rhodopseudomonas palustris (strain BisB18)).